A 133-amino-acid polypeptide reads, in one-letter code: Small ribosomal subunit protein uS8 (133 aa).

It belongs to the universal ribosomal protein uS8 family. In terms of assembly, part of the 30S ribosomal subunit. Contacts proteins S5 and S12.

One of the primary rRNA binding proteins, it binds directly to 16S rRNA central domain where it helps coordinate assembly of the platform of the 30S subunit. The polypeptide is Small ribosomal subunit protein uS8 (Deinococcus radiodurans (strain ATCC 13939 / DSM 20539 / JCM 16871 / CCUG 27074 / LMG 4051 / NBRC 15346 / NCIMB 9279 / VKM B-1422 / R1)).